A 127-amino-acid chain; its full sequence is Fluoride-specific ion channel FluC (127 aa).

4 helical membrane passes run 4–24, 35–55, 71–91, and 103–123; these read LLLAVFIGGGTGSVARWLLSM, LGTLAANLIGAFIIGMGFAWF, TGFCGGLTTFSTFSAEVVFLL, and VFVNLLGSFAMTALAFWLFSA. Na(+) is bound by residues Gly75 and Thr78.

The protein belongs to the fluoride channel Fluc/FEX (TC 1.A.43) family.

The protein localises to the cell inner membrane. The enzyme catalyses fluoride(in) = fluoride(out). Na(+) is not transported, but it plays an essential structural role and its presence is essential for fluoride channel function. Fluoride-specific ion channel. Important for reducing fluoride concentration in the cell, thus reducing its toxicity. The polypeptide is Fluoride-specific ion channel FluC (Escherichia coli O17:K52:H18 (strain UMN026 / ExPEC)).